The primary structure comprises 229 residues: Cytochrome c oxidase subunit 2 (229 aa).

At 1 to 26 (MSTWANLGLQDSASPLMEQLIFFHDH) the chain is on the mitochondrial intermembrane side. Residues 27 to 48 (ALLILVMITILVGYLMFMLFFN) form a helical membrane-spanning segment. Topologically, residues 49–62 (SYINRFLLHGQLIE) are mitochondrial matrix. Residues 63–82 (MIWTILPAIILLFIAMPSLR) form a helical membrane-spanning segment. Over 83 to 229 (LLYLLDEINE…IKWIASKVNS (147 aa)) the chain is Mitochondrial intermembrane. Cu cation contacts are provided by His161, Cys196, Glu198, Cys200, His204, and Met207. Glu198 contributes to the Mg(2+) binding site.

It belongs to the cytochrome c oxidase subunit 2 family. In terms of assembly, component of the cytochrome c oxidase (complex IV, CIV), a multisubunit enzyme composed of a catalytic core of 3 subunits and several supernumerary subunits. The complex exists as a monomer or a dimer and forms supercomplexes (SCs) in the inner mitochondrial membrane with ubiquinol-cytochrome c oxidoreductase (cytochrome b-c1 complex, complex III, CIII). The cofactor is Cu cation.

It is found in the mitochondrion inner membrane. The catalysed reaction is 4 Fe(II)-[cytochrome c] + O2 + 8 H(+)(in) = 4 Fe(III)-[cytochrome c] + 2 H2O + 4 H(+)(out). In terms of biological role, component of the cytochrome c oxidase, the last enzyme in the mitochondrial electron transport chain which drives oxidative phosphorylation. The respiratory chain contains 3 multisubunit complexes succinate dehydrogenase (complex II, CII), ubiquinol-cytochrome c oxidoreductase (cytochrome b-c1 complex, complex III, CIII) and cytochrome c oxidase (complex IV, CIV), that cooperate to transfer electrons derived from NADH and succinate to molecular oxygen, creating an electrochemical gradient over the inner membrane that drives transmembrane transport and the ATP synthase. Cytochrome c oxidase is the component of the respiratory chain that catalyzes the reduction of oxygen to water. Electrons originating from reduced cytochrome c in the intermembrane space (IMS) are transferred via the dinuclear copper A center (CU(A)) of subunit 2 and heme A of subunit 1 to the active site in subunit 1, a binuclear center (BNC) formed by heme A3 and copper B (CU(B)). The BNC reduces molecular oxygen to 2 water molecules using 4 electrons from cytochrome c in the IMS and 4 protons from the mitochondrial matrix. This Drosophila bifasciata (Fruit fly) protein is Cytochrome c oxidase subunit 2 (mt:CoII).